Here is a 791-residue protein sequence, read N- to C-terminus: Lon protease (791 aa).

Residues 3-209 (KPILISRAIV…TILHLLFDQL (207 aa)) enclose the Lon N-terminal domain. 365–372 (GPPGVGKT) contributes to the ATP binding site. Residues 605–790 (TTIPGIVNGM…DEVYNIVFGE (186 aa)) form the Lon proteolytic domain. Active-site residues include Ser696 and Lys739.

This sequence belongs to the peptidase S16 family. Homohexamer. Organized in a ring with a central cavity.

The protein localises to the cytoplasm. It catalyses the reaction Hydrolysis of proteins in presence of ATP.. In terms of biological role, ATP-dependent serine protease that mediates the selective degradation of mutant and abnormal proteins as well as certain short-lived regulatory proteins. Required for cellular homeostasis and for survival from DNA damage and developmental changes induced by stress. Degrades polypeptides processively to yield small peptide fragments that are 5 to 10 amino acids long. Binds to DNA in a double-stranded, site-specific manner. The sequence is that of Lon protease from Ureaplasma parvum serovar 3 (strain ATCC 27815 / 27 / NCTC 11736).